The chain runs to 109 residues: Ribonuclease P protein component (109 aa).

The protein belongs to the RnpA family. In terms of assembly, consists of a catalytic RNA component (M1 or rnpB) and a protein subunit.

It carries out the reaction Endonucleolytic cleavage of RNA, removing 5'-extranucleotides from tRNA precursor.. Functionally, RNaseP catalyzes the removal of the 5'-leader sequence from pre-tRNA to produce the mature 5'-terminus. It can also cleave other RNA substrates such as 4.5S RNA. The protein component plays an auxiliary but essential role in vivo by binding to the 5'-leader sequence and broadening the substrate specificity of the ribozyme. The protein is Ribonuclease P protein component of Mycoplasma capricolum subsp. capricolum (strain California kid / ATCC 27343 / NCTC 10154).